A 78-amino-acid chain; its full sequence is Apolipoprotein C-I (78 aa).

The signal sequence occupies residues 1–26 (MRLILWLPVLVVVLLMVLEGPAPAQG).

The protein belongs to the apolipoprotein C1 family.

It localises to the secreted. Its function is as follows. Inhibitor of lipoprotein binding to the low density lipoprotein (LDL) receptor, LDL receptor-related protein, and very low density lipoprotein (VLDL) receptor. Associates with high density lipoproteins (HDL) and the triacylglycerol-rich lipoproteins in the plasma and makes up about 10% of the protein of the VLDL and 2% of that of HDL. Appears to interfere directly with fatty acid uptake and is also the major plasma inhibitor of cholesteryl ester transfer protein (CETP). Binds free fatty acids and reduces their intracellular esterification. Modulates the interaction of APOE with beta-migrating VLDL and inhibits binding of beta-VLDL to the LDL receptor-related protein. This is Apolipoprotein C-I (APOC1) from Puma concolor (Mountain lion).